The primary structure comprises 65 residues: Large ribosomal subunit protein bL35 (65 aa).

Composition is skewed to basic residues over residues 1 to 18 (MPKMKTKSAAAKRFKRTA), 31 to 44 (HRFHGKTKKQRRQL), and 55 to 65 (VKRYKKMIPAK). The disordered stretch occupies residues 1 to 65 (MPKMKTKSAA…KRYKKMIPAK (65 aa)).

The protein belongs to the bacterial ribosomal protein bL35 family.

This chain is Large ribosomal subunit protein bL35, found in Limosilactobacillus fermentum (strain NBRC 3956 / LMG 18251) (Lactobacillus fermentum).